Consider the following 146-residue polypeptide: Hemoglobin subunit beta (146 aa).

An N-acetylvaline modification is found at Val1. One can recognise a Globin domain in the interval 2–146 (HLTGEEKAAV…VANALAHKYH (145 aa)). A Phosphothreonine modification is found at Thr12. Ser44 is modified (phosphoserine). Position 59 is an N6-acetyllysine (Lys59). Position 63 (His63) interacts with heme b. Lys82 is subject to N6-acetyllysine. Position 92 (His92) interacts with heme b. Residue Cys93 is modified to S-nitrosocysteine. Residue Lys144 is modified to N6-acetyllysine.

It belongs to the globin family. Heterotetramer of two alpha chains and two beta chains. Red blood cells.

In terms of biological role, involved in oxygen transport from the lung to the various peripheral tissues. This is Hemoglobin subunit beta (HBB) from Martes foina (Beech marten).